Here is a 157-residue protein sequence, read N- to C-terminus: DNA gyrase inhibitor (157 aa).

The protein belongs to the DNA gyrase inhibitor family. Interacts with DNA gyrase.

Its subcellular location is the cytoplasm. Its function is as follows. Inhibits the supercoiling activity of DNA gyrase. Acts by inhibiting DNA gyrase at an early step, prior to (or at the step of) binding of DNA by the gyrase. It protects cells against toxins that target DNA gyrase, by inhibiting activity of these toxins and reducing the formation of lethal double-strand breaks in the cell. The sequence is that of DNA gyrase inhibitor from Cronobacter sakazakii (strain ATCC BAA-894) (Enterobacter sakazakii).